The sequence spans 569 residues: Probable diguanylate cyclase DgcQ (569 aa).

Helical transmembrane passes span 25 to 45 (LGPGHVVNLCFIVVLLFSTLL) and 365 to 385 (IALTLLWALFTTMLLISWYVI). The GGDEF domain occupies 433-568 (HPFSVIQVDL…GRNRVCASDN (136 aa)). A Mg(2+)-binding site is contributed by Asp441. Asn449, His454, and Asp458 together coordinate substrate. Glu484 contributes to the Mg(2+) binding site. Glu484 (proton acceptor) is an active-site residue.

In terms of assembly, homodimer. Mg(2+) serves as cofactor.

Its subcellular location is the cell inner membrane. It catalyses the reaction 2 GTP = 3',3'-c-di-GMP + 2 diphosphate. It participates in glycan metabolism; bacterial cellulose biosynthesis. It functions in the pathway purine metabolism; 3',5'-cyclic di-GMP biosynthesis. Catalyzes the synthesis of cyclic-di-GMP (c-di-GMP) via the condensation of 2 GTP molecules. Cyclic-di-GMP is a second messenger which controls cell surface-associated traits in bacteria. Involved in the regulation of cellulose production. This is Probable diguanylate cyclase DgcQ from Shigella sonnei (strain Ss046).